Here is a 155-residue protein sequence, read N- to C-terminus: Putative pre-16S rRNA nuclease (155 aa).

The protein belongs to the YqgF nuclease family.

It localises to the cytoplasm. Its function is as follows. Could be a nuclease involved in processing of the 5'-end of pre-16S rRNA. The polypeptide is Putative pre-16S rRNA nuclease (Wolbachia sp. subsp. Drosophila simulans (strain wRi)).